A 388-amino-acid chain; its full sequence is Granulocyte-macrophage colony-stimulating factor receptor subunit alpha (388 aa).

An N-terminal signal peptide occupies residues 1–29 (MTSSHAMNITPLAQLALLFSTLLLPGTQA). Residues 30–327 (LLAPTTPDAG…PLEAEDTRVP (298 aa)) lie on the Extracellular side of the membrane. 6 N-linked (GlcNAc...) asparagine glycosylation sites follow: N43, N63, N106, N132, N165, and N237. In terms of domain architecture, Fibronectin type-III spans 228–324 (PPRDVTASCN…PAHPLEAEDT (97 aa)). Positions 310-314 (WGEWS) match the WSXWS motif motif. A helical transmembrane segment spans residues 328–348 (GALLYAVTACAVLLCALALGV). Residues 349–388 (TCRRFEVTRRLFPPIPGIRDKVSDDVRVNPETLRKDLLQP) lie on the Cytoplasmic side of the membrane. A Box 1 motif motif is present at residues 359–367 (LFPPIPGIR).

The protein belongs to the type I cytokine receptor family. Type 5 subfamily. In terms of assembly, heterodimer of an alpha and a beta subunit. The beta subunit is common to the IL3, IL5 and GM-CSF receptors. The signaling GM-CSF receptor complex is a dodecamer of two head-to-head hexamers of two alpha, two beta, and two ligand subunits.

The protein localises to the membrane. Functionally, low affinity receptor for granulocyte-macrophage colony-stimulating factor. Transduces a signal that results in the proliferation, differentiation, and functional activation of hematopoietic cells. The sequence is that of Granulocyte-macrophage colony-stimulating factor receptor subunit alpha (Csf2ra) from Mus musculus (Mouse).